A 118-amino-acid chain; its full sequence is Large ribosomal subunit protein bL17 (118 aa).

It belongs to the bacterial ribosomal protein bL17 family. As to quaternary structure, part of the 50S ribosomal subunit. Contacts protein L32.

The sequence is that of Large ribosomal subunit protein bL17 from Aster yellows witches'-broom phytoplasma (strain AYWB).